A 72-amino-acid chain; its full sequence is Crustacean hyperglycemic hormone (72 aa).

The residue at position 1 (Gln1) is a Pyrrolidone carboxylic acid; partial. 3 disulfide bridges follow: Cys7/Cys43, Cys23/Cys39, and Cys26/Cys52. Position 72 is a valine amide (Val72).

This sequence belongs to the arthropod CHH/MIH/GIH/VIH hormone family. Post-translationally, the N-terminus forms pyrrolidone carboxylic acid in isoform CHH-II and is free in isoform CHH-I. Produced by the medulla terminalis X-organ in the eyestalks and transported to the sinus gland where they are stored and released.

The protein localises to the secreted. Hormone found in the sinus gland of isopods and decapods which controls the blood sugar level. Has a secretagogue action over the amylase released from the midgut gland. May act as a stress hormone and may be involved in the control of molting and reproduction. In Cancer pagurus (Rock crab), this protein is Crustacean hyperglycemic hormone.